A 54-amino-acid polypeptide reads, in one-letter code: Phorbol-12-myristate-13-acetate-induced protein 1 (54 aa).

The short motif at 29–37 is the BH3 element; that stretch reads LRRFGDKLN. Residues 41–50 form a required for mitochondrial location region; it reads KLLNLISKLF.

It belongs to the PMAIP1 family. In terms of assembly, interacts with MCL1. Interacts with BCL2A1. Interacts with BAX. Interacts with BCL2L10. In terms of tissue distribution, highly expressed in adult T-cell leukemia cell line.

Its subcellular location is the mitochondrion. Functionally, promotes activation of caspases and apoptosis. Promotes mitochondrial membrane changes and efflux of apoptogenic proteins from the mitochondria. Contributes to p53/TP53-dependent apoptosis after radiation exposure. Promotes proteasomal degradation of MCL1. Competes with BAK1 for binding to MCL1 and can displace BAK1 from its binding site on MCL1. Competes with BIM/BCL2L11 for binding to MCL1 and can displace BIM/BCL2L11 from its binding site on MCL1. This chain is Phorbol-12-myristate-13-acetate-induced protein 1 (PMAIP1), found in Homo sapiens (Human).